We begin with the raw amino-acid sequence, 155 residues long: ATP synthase assembly factor FMC1, mitochondrial (155 aa).

The protein belongs to the FMC1 family.

It localises to the mitochondrion. Needed for the assembly of the mitochondrial F1-F0 complex at high temperature. The chain is ATP synthase assembly factor FMC1, mitochondrial (FMC1) from Saccharomyces cerevisiae (strain ATCC 204508 / S288c) (Baker's yeast).